We begin with the raw amino-acid sequence, 522 residues long: Maturase K (522 aa).

The protein belongs to the intron maturase 2 family. MatK subfamily.

The protein localises to the plastid. Its subcellular location is the chloroplast. Functionally, usually encoded in the trnK tRNA gene intron. Probably assists in splicing its own and other chloroplast group II introns. This chain is Maturase K, found in Schizorhiza neglecta (Lapeirousia neglecta).